The primary structure comprises 360 residues: Mannose-1-phosphate guanylyltransferase catalytic subunit beta (360 aa).

The tract at residues 2-222 is substrate-binding domain; the sequence is KALILVGGYG…QGFWMDIGQP (221 aa). Asp-110 lines the GDP-alpha-D-mannose pocket. A Mg(2+)-binding site is contributed by Asp-110. The active site involves Lys-162. Asp-218 is a GDP-alpha-D-mannose binding site. Residues 245-360 form a hexapeptide repeat domain region; it reads YSGPGIVGNV…ESVPEPRIIM (116 aa).

Belongs to the transferase hexapeptide repeat family. As to quaternary structure, component of the GMPPA-GMPPB mannose-1-phosphate guanylyltransferase complex composed of 4 GMPPA subunits and 8 GMPPB subunits; the complex is organized into three layers, a central layer made up of 2 GMPPA dimers sandwiched between two layers each made up of 2 GMPPB dimers. GMPPB catalytic activity is reduced when part of the complex and binding of GDP-alpha-D-Mannose by GMPPA induces allosteric feedback inhibition of GMPPB. It depends on Mg(2+) as a cofactor.

The protein localises to the cytoplasm. It catalyses the reaction alpha-D-mannose 1-phosphate + GTP + H(+) = GDP-alpha-D-mannose + diphosphate. The protein operates within nucleotide-sugar biosynthesis; GDP-alpha-D-mannose biosynthesis; GDP-alpha-D-mannose from alpha-D-mannose 1-phosphate (GTP route): step 1/1. Its activity is regulated as follows. Enzyme activity is reduced by incorporation into the GMPPA-GMPPB mannose-1-phosphate guanylyltransferase complex. Allosterically inhibited, when part of the GMPPA-GMPPB complex, by GDP-alpha-D-mannose binding to GMPPA. Catalytic subunit of the GMPPA-GMPPB mannose-1-phosphate guanylyltransferase complex. Catalyzes the formation of GDP-mannose, an essential precursor of glycan moieties of glycoproteins and glycolipids. Can catalyze the reverse reaction in vitro. Together with GMPPA regulates GDP-alpha-D-mannose levels. The sequence is that of Mannose-1-phosphate guanylyltransferase catalytic subunit beta from Mus musculus (Mouse).